The chain runs to 207 residues: Putative 3-methyladenine DNA glycosylase (207 aa).

Belongs to the DNA glycosylase MPG family.

In Listeria monocytogenes serotype 4a (strain HCC23), this protein is Putative 3-methyladenine DNA glycosylase.